The sequence spans 393 residues: Xyloside xylosyltransferase 1 (393 aa).

The Cytoplasmic segment spans residues 1-23 (MGLLRGGLPCARAMARLGAVRSH). Residues 24–44 (YCALLLAAALAVCAFYYLGSG) traverse the membrane as a helical; Signal-anchor for type II membrane protein segment. At 45 to 393 (RETFSSATKR…GNCNTPIPED (349 aa)) the chain is on the lumenal side. 104-106 (MFT) is a UDP-alpha-D-xylose binding site. Position 226 (Asp226) interacts with Mn(2+). Leu227 provides a ligand contact to UDP-alpha-D-xylose. Asp228 contacts Mn(2+). The tract at residues 263 to 266 (HTFW) is interaction with target proteins. 3 residues coordinate UDP-alpha-D-xylose: Ser290, Leu328, and Gln331. Residues Gln331 and Trp360 each contribute to the a glycoprotein site. 2 disulfide bridges follow: Cys350/Cys375 and Cys357/Cys386. Residue His383 participates in Mn(2+) binding. Asn385 contacts a glycoprotein.

It belongs to the glycosyltransferase 8 family. In terms of assembly, homodimer. Dimer formation may be essential for the retention in endoplasmic reticulum. It depends on Mg(2+) as a cofactor. Mn(2+) is required as a cofactor.

It localises to the endoplasmic reticulum membrane. The catalysed reaction is 3-O-[alpha-D-xylosyl-(1-&gt;3)-beta-D-glucosyl]-L-seryl-[EGF-like domain protein] + UDP-alpha-D-xylose = 3-O-[alpha-D-xylosyl-(1-&gt;3)-alpha-D-xylosyl-(1-&gt;3)-beta-D-glucosyl]-L-seryl-[EGF-like domain protein] + UDP + H(+). Its function is as follows. Alpha-1,3-xylosyltransferase, which elongates the O-linked xylose-glucose disaccharide attached to EGF-like repeats in the extracellular domain of target proteins by catalyzing the addition of the second xylose. Known targets include Notch proteins and coagulation factors, such as F9. The protein is Xyloside xylosyltransferase 1 (XXYLT1) of Homo sapiens (Human).